A 256-amino-acid chain; its full sequence is Small ribosomal subunit protein eS1 (256 aa).

Position 2 is an N-acetylalanine; partial (Ala-2).

Belongs to the eukaryotic ribosomal protein eS1 family. As to quaternary structure, component of the small ribosomal subunit. Mature ribosomes consist of a small (40S) and a large (60S) subunit. The 40S subunit contains about 33 different proteins and 1 molecule of RNA (18S). The 60S subunit contains about 49 different proteins and 3 molecules of RNA (25S, 5.8S and 5S).

Its subcellular location is the cytoplasm. In Botryotinia fuckeliana (strain B05.10) (Noble rot fungus), this protein is Small ribosomal subunit protein eS1 (rps1).